Here is an 87-residue protein sequence, read N- to C-terminus: Mitotic-spindle organizing protein 1 (87 aa).

This sequence belongs to the MOZART1 family. Part of the gamma-tubulin complex.

Its subcellular location is the cytoplasm. It is found in the cytoskeleton. It localises to the microtubule organizing center. The protein localises to the spindle pole body. In terms of biological role, required for gamma-tubulin complex recruitment to the microtubule organizing center (MTOC). The sequence is that of Mitotic-spindle organizing protein 1 from Chaetomium globosum (strain ATCC 6205 / CBS 148.51 / DSM 1962 / NBRC 6347 / NRRL 1970) (Soil fungus).